We begin with the raw amino-acid sequence, 207 residues long: Guanylate kinase (207 aa).

Positions 10 to 187 (GFFIVLSAAS…AVERLQVIYQ (178 aa)) constitute a Guanylate kinase-like domain. 17–24 (AASGTGKT) contacts ATP.

It belongs to the guanylate kinase family.

The protein resides in the cytoplasm. It carries out the reaction GMP + ATP = GDP + ADP. Essential for recycling GMP and indirectly, cGMP. This Syntrophus aciditrophicus (strain SB) protein is Guanylate kinase.